We begin with the raw amino-acid sequence, 129 residues long: Small ribosomal subunit protein uS11 (129 aa).

It belongs to the universal ribosomal protein uS11 family. Part of the 30S ribosomal subunit. Interacts with proteins S7 and S18. Binds to IF-3.

Located on the platform of the 30S subunit, it bridges several disparate RNA helices of the 16S rRNA. Forms part of the Shine-Dalgarno cleft in the 70S ribosome. The polypeptide is Small ribosomal subunit protein uS11 (Hydrogenovibrio crunogenus (strain DSM 25203 / XCL-2) (Thiomicrospira crunogena)).